Consider the following 193-residue polypeptide: Thioredoxin reductase-like selenoprotein T1a (193 aa).

An N-terminal signal peptide occupies residues 1-21 (MRWLPFSALLLWALCLHSASA). The segment at residues 44–47 (CVSU) is a cross-link (cysteinyl-selenocysteine (Cys-Sec)). A non-standard amino acid (selenocysteine) is located at residue selenocysteine 47. Residues 83–101 (IASFLSMFKLLLIGVIILG) form a helical membrane-spanning segment.

Belongs to the SelWTH family. Selenoprotein T subfamily. May contain a selenide-sulfide bond between Cys-44 and Sec-47. This bond is speculated to serve as redox-active pair. As to expression, expressed in embryonic olfactory vesicles and the photoreceptor cell layer of the embryonic retina. Low level in embryonic epiphysis.

It localises to the endoplasmic reticulum membrane. It carries out the reaction [thioredoxin]-dithiol + NADP(+) = [thioredoxin]-disulfide + NADPH + H(+). Its function is as follows. Selenoprotein with thioredoxin reductase-like oxidoreductase activity. The polypeptide is Thioredoxin reductase-like selenoprotein T1a (Danio rerio (Zebrafish)).